Reading from the N-terminus, the 152-residue chain is Transcriptional repressor NrdR (152 aa).

The segment at 3-34 (CPACQHNGTRVLDSRPVDEGRSIRRRRECESC) is a zinc-finger region. An ATP-cone domain is found at 49-139 (LIVVKKEGIR…VYRQFKDINV (91 aa)).

Belongs to the NrdR family. Zn(2+) serves as cofactor.

Functionally, negatively regulates transcription of bacterial ribonucleotide reductase nrd genes and operons by binding to NrdR-boxes. The protein is Transcriptional repressor NrdR of Bacillus licheniformis (strain ATCC 14580 / DSM 13 / JCM 2505 / CCUG 7422 / NBRC 12200 / NCIMB 9375 / NCTC 10341 / NRRL NRS-1264 / Gibson 46).